Here is a 297-residue protein sequence, read N- to C-terminus: Elongation factor Ts (297 aa).

Positions 82-85 (TDFV) are involved in Mg(2+) ion dislocation from EF-Tu.

It belongs to the EF-Ts family.

The protein resides in the cytoplasm. In terms of biological role, associates with the EF-Tu.GDP complex and induces the exchange of GDP to GTP. It remains bound to the aminoacyl-tRNA.EF-Tu.GTP complex up to the GTP hydrolysis stage on the ribosome. This is Elongation factor Ts from Azoarcus sp. (strain BH72).